A 359-amino-acid polypeptide reads, in one-letter code: Heme A synthase (359 aa).

5 consecutive transmembrane segments (helical) span residues 8-28 (IMSI…VVGG), 94-114 (LLGR…CYLK), 124-144 (LLLI…MVKS), 159-179 (GHLL…LIII), and 215-235 (IIIF…GLDA). H274 is a binding site for heme. Helical transmembrane passes span 276 to 296 (WFGI…IILN), 303 to 323 (MGMV…ITLL), and 328 to 348 (ILAA…FLFI). Heme is bound at residue H334.

It belongs to the COX15/CtaA family. Type 2 subfamily. Interacts with CtaB. The cofactor is heme b.

Its subcellular location is the cell membrane. The enzyme catalyses Fe(II)-heme o + 2 A + H2O = Fe(II)-heme a + 2 AH2. It functions in the pathway porphyrin-containing compound metabolism; heme A biosynthesis; heme A from heme O: step 1/1. Functionally, catalyzes the conversion of heme O to heme A by two successive hydroxylations of the methyl group at C8. The first hydroxylation forms heme I, the second hydroxylation results in an unstable dihydroxymethyl group, which spontaneously dehydrates, resulting in the formyl group of heme A. In Orientia tsutsugamushi (strain Boryong) (Rickettsia tsutsugamushi), this protein is Heme A synthase.